A 493-amino-acid chain; its full sequence is Argininosuccinate lyase (493 aa).

The protein belongs to the lyase 1 family. Argininosuccinate lyase subfamily.

The protein resides in the cytoplasm. It catalyses the reaction 2-(N(omega)-L-arginino)succinate = fumarate + L-arginine. It participates in amino-acid biosynthesis; L-arginine biosynthesis; L-arginine from L-ornithine and carbamoyl phosphate: step 3/3. The sequence is that of Argininosuccinate lyase from Clavibacter sepedonicus (Clavibacter michiganensis subsp. sepedonicus).